The sequence spans 382 residues: Mannitol-1-phosphate 5-dehydrogenase (382 aa).

An NAD(+)-binding site is contributed by alanine 3–glycine 14.

It belongs to the mannitol dehydrogenase family.

The catalysed reaction is D-mannitol 1-phosphate + NAD(+) = beta-D-fructose 6-phosphate + NADH + H(+). In Aliivibrio salmonicida (strain LFI1238) (Vibrio salmonicida (strain LFI1238)), this protein is Mannitol-1-phosphate 5-dehydrogenase.